Here is a 326-residue protein sequence, read N- to C-terminus: Transcription cofactor vestigial-like protein 3 (326 aa).

Residues 57-80 form a disordered region; it reads VTLPSKQEEEDEEEEEEEKDQPAE. Lys-62 participates in a covalent cross-link: Glycyl lysine isopeptide (Lys-Gly) (interchain with G-Cter in SUMO2). Over residues 64–75 the composition is skewed to acidic residues; the sequence is EEEDEEEEEEEK. A Glycyl lysine isopeptide (Lys-Gly) (interchain with G-Cter in SUMO2) cross-link involves residue Lys-126. Disordered stretches follow at residues 175–203 and 233–256; these read PPGT…PPAV and HAHM…SALD. The span at 233-249 shows a compositional bias: basic residues; it reads HAHMHHRHRHHHHHHHP.

The protein belongs to the vestigial family. As to expression, enriched in placenta.

The protein resides in the nucleus. May act as a specific coactivator for the mammalian TEFs. This Homo sapiens (Human) protein is Transcription cofactor vestigial-like protein 3 (VGLL3).